Consider the following 166-residue polypeptide: Large ribosomal subunit protein mL41 (166 aa).

The N-terminal 26 residues, 1–26 (MQNCIKLVPLALKCPQRAISTSAVLD), are a transit peptide targeting the mitochondrion.

The protein belongs to the mitochondrion-specific ribosomal protein mL41 family. As to quaternary structure, component of the mitochondrial ribosome large subunit (39S) which comprises a 16S rRNA and about 50 distinct proteins.

Its subcellular location is the mitochondrion. In Drosophila pseudoobscura pseudoobscura (Fruit fly), this protein is Large ribosomal subunit protein mL41 (mRpL41).